The sequence spans 173 residues: Co-chaperone protein HscB homolog (173 aa).

Residues 5–77 (CHFAQFDLQP…PRRALYLLTL (73 aa)) form the J domain.

The protein belongs to the HscB family. In terms of assembly, interacts with HscA and stimulates its ATPase activity.

Functionally, co-chaperone involved in the maturation of iron-sulfur cluster-containing proteins. Seems to help targeting proteins to be folded toward HscA. In Pseudomonas paraeruginosa (strain DSM 24068 / PA7) (Pseudomonas aeruginosa (strain PA7)), this protein is Co-chaperone protein HscB homolog.